Consider the following 883-residue polypeptide: Serine/threonine-protein kinase greatwall (883 aa).

Residue Met1 is modified to N-acetylmethionine. The tract at residues 1-23 (MEPTMGGEMESGGGAATGECVNR) is disordered. The Protein kinase domain maps to 35–839 (FTIVKPISRG…MKELKHHPLF (805 aa)). ATP is bound by residues 41–49 (ISRGAFGKV) and Lys62. The active-site Proton acceptor is Asp156. A phosphothreonine mark is found at Thr209 and Thr224. Ser295 is modified (phosphoserine). A disordered region spans residues 298-317 (RLATSSTSSPSHTFISSMES). Positions 301–314 (TSSTSSPSHTFISS) are enriched in low complexity. Phosphoserine occurs at positions 373 and 456. The tract at residues 511–530 (ENVGSSFTDKHQTPEKSPVP) is disordered. Thr523 is subject to Phosphothreonine. Phosphoserine occurs at positions 556 and 560. Residues 569-597 (IHMDSDSSFPGISIMESPLGGQSLDPDKN) form a disordered region. Residues Ser635, Ser661, and Ser672 each carry the phosphoserine modification. Positions 706–737 (RSDMPYQQTPNQVKSETPYRTPKSVRRGAAPV) are disordered. Residues 710–720 (PYQQTPNQVKS) show a composition bias toward polar residues. Thr726 is modified (phosphothreonine). The residue at position 729 (Ser729) is a Phosphoserine. Thr745 bears the Phosphothreonine; by CDK1 mark. In terms of domain architecture, AGC-kinase C-terminal spans 840 to 883 (SGVDWENLQHQKMPFIPQPDDETDTSYFEARNNAQHLTVSGFSL). 2 positions are modified to phosphoserine: Ser879 and Ser882.

Belongs to the protein kinase superfamily. AGC Ser/Thr protein kinase family. Post-translationally, phosphorylation at Thr-745 by CDK1 during M phase activates its kinase activity. Maximum phosphorylation occurs in prometaphase.

The protein resides in the cytoplasm. It is found in the cytoskeleton. Its subcellular location is the microtubule organizing center. The protein localises to the centrosome. It localises to the nucleus. It catalyses the reaction L-seryl-[protein] + ATP = O-phospho-L-seryl-[protein] + ADP + H(+). It carries out the reaction L-threonyl-[protein] + ATP = O-phospho-L-threonyl-[protein] + ADP + H(+). Serine/threonine kinase that plays a key role in M phase by acting as a regulator of mitosis entry and maintenance. Acts by promoting the inactivation of protein phosphatase 2A (PP2A) during M phase: does not directly inhibit PP2A but acts by mediating phosphorylation and subsequent activation of ARPP19 and ENSA at 'Ser-62' and 'Ser-67', respectively. ARPP19 and ENSA are phosphatase inhibitors that specifically inhibit the PPP2R2D (PR55-delta) subunit of PP2A. Inactivation of PP2A during M phase is essential to keep cyclin-B1-CDK1 activity high. Following DNA damage, it is also involved in checkpoint recovery by being inhibited. The protein is Serine/threonine-protein kinase greatwall (MASTL) of Bos taurus (Bovine).